We begin with the raw amino-acid sequence, 210 residues long: Probable membrane protein Rv1733c (210 aa).

2 helical membrane passes run 43 to 63 (AVVMLLAVTVSLLTIPFAAAA) and 165 to 185 (ALAALGLWLSVAAVAGALLAL).

The protein localises to the cell membrane. This chain is Probable membrane protein Rv1733c, found in Mycobacterium tuberculosis (strain ATCC 25618 / H37Rv).